Consider the following 78-residue polypeptide: Calcium/calmodulin-dependent protein kinase II inhibitor 1 (78 aa).

The interval 41 to 68 (NKRPPKLGQIGRSKRVVIEDDRIDDVLK) is CAMK2 inhibitory domain.

It belongs to the CAMK2N family. In terms of assembly, interacts with CAMK2B; the presence of Ca(2+)/calmodulin increases the interaction but is not essential. Interacts with CAMK2A; this interaction requires CAMK2A activation by Ca(2+).

Its subcellular location is the synapse. The protein resides in the cell projection. It is found in the dendrite. It localises to the postsynaptic density. Functionally, potent and specific inhibitor of CaM-kinase II (CAMK2). Plays a role in the maintenance of long-term retrieval-induced memory in response to contextual fear. Modulates blood pressure and vascular reactivity via regulation of CAMK2 activity in addition to regulation of left ventricular mass. Mediates the NLRP3 inflammasome in cardiomyocytes via acting as an inhibitor of the MAPK14/p38 and MAPK8/JNK pathways, thereby regulating ventricular remodeling and cardiac rhythm post-myocardial infarction. Negatively effects insulin sensitivity and promotes lipid formation in adipose tissues independent of CAMK2 signaling. The chain is Calcium/calmodulin-dependent protein kinase II inhibitor 1 (CAMK2N1) from Bos taurus (Bovine).